The chain runs to 115 residues: Large ribosomal subunit protein bL20 (115 aa).

It belongs to the bacterial ribosomal protein bL20 family.

Functionally, binds directly to 23S ribosomal RNA and is necessary for the in vitro assembly process of the 50S ribosomal subunit. It is not involved in the protein synthesizing functions of that subunit. The chain is Large ribosomal subunit protein bL20 from Salinibacter ruber (strain DSM 13855 / M31).